The primary structure comprises 325 residues: Biotin synthase (325 aa).

In terms of domain architecture, Radical SAM core spans 52-281 (YQKDDVVLCS…AKPLLICGGR (230 aa)). The [4Fe-4S] cluster site is built by cysteine 70, cysteine 74, and cysteine 77. Serine 114, cysteine 146, and cysteine 206 together coordinate [2Fe-2S] cluster.

Belongs to the radical SAM superfamily. Biotin synthase family. Homodimer. [4Fe-4S] cluster is required as a cofactor. Requires [2Fe-2S] cluster as cofactor.

It carries out the reaction (4R,5S)-dethiobiotin + (sulfur carrier)-SH + 2 reduced [2Fe-2S]-[ferredoxin] + 2 S-adenosyl-L-methionine = (sulfur carrier)-H + biotin + 2 5'-deoxyadenosine + 2 L-methionine + 2 oxidized [2Fe-2S]-[ferredoxin]. It participates in cofactor biosynthesis; biotin biosynthesis; biotin from 7,8-diaminononanoate: step 2/2. Functionally, catalyzes the conversion of dethiobiotin (DTB) to biotin by the insertion of a sulfur atom into dethiobiotin via a radical-based mechanism. The sequence is that of Biotin synthase from Syntrophus aciditrophicus (strain SB).